We begin with the raw amino-acid sequence, 70 residues long: U2-agatoxin-Ao1j (70 aa).

An N-terminal signal peptide occupies residues 1 to 20 (MRAIISLLLISAMVFSMIAA). The propeptide occupies 21-34 (VPEEEGLQLSEDER). Intrachain disulfides connect Cys37–Cys53, Cys44–Cys58, and Cys52–Cys68. Leu69 is modified (leucine amide).

Belongs to the neurotoxin 01 (U2-agtx) family. As to expression, expressed by the venom gland.

The protein resides in the secreted. Its function is as follows. Insect active toxin causing rapid but reversible paralysis in crickets. No activity shown in mammals. Does not show effect on mammalian voltage-gated calcium channels. The chain is U2-agatoxin-Ao1j from Agelena orientalis (Funnel-web spider).